A 426-amino-acid polypeptide reads, in one-letter code: Gamma-glutamyl phosphate reductase (426 aa).

This sequence belongs to the gamma-glutamyl phosphate reductase family.

Its subcellular location is the cytoplasm. The enzyme catalyses L-glutamate 5-semialdehyde + phosphate + NADP(+) = L-glutamyl 5-phosphate + NADPH + H(+). The protein operates within amino-acid biosynthesis; L-proline biosynthesis; L-glutamate 5-semialdehyde from L-glutamate: step 2/2. Catalyzes the NADPH-dependent reduction of L-glutamate 5-phosphate into L-glutamate 5-semialdehyde and phosphate. The product spontaneously undergoes cyclization to form 1-pyrroline-5-carboxylate. This Sorangium cellulosum (strain So ce56) (Polyangium cellulosum (strain So ce56)) protein is Gamma-glutamyl phosphate reductase.